A 1403-amino-acid chain; its full sequence is MRLGAAWALLLAAALGLGTRGVRAAVALADFYPFGTKRGDTVTPKQDDGGSGLQPLSVPFPFFGAEHSGLYVNNNGIISFLKEVSQFTPVAFPIAKDRCVVAAFWADVDNRRAGDVYYREATDPAMLNRATEDIRRYFPELPDFSATWVFVATWYRVTFFGGSSSSPVNTFQTVLITDGRFSFTIFNYESILWTTGTHASSGGDTDGLGGIAAQAGFNAGDGHRYFNIPGSRTADMAEVETTTNVGVPGRWAFRIDDAQVRVGGCGHTTSVCLVLRPCLNGGKCIDDCVTGNPSYTCSCLAGFTGRRCHLDVNECASHPCQNGGTCTHGVNSFSCQCPAGFKGPTCESAQSPCDNKVCQNGGQCQAESSSAVCVCQAGYTGATCETDVDECSSDPCQNGGSCVDLVGNYSCICVEPFEGPQCETGSYLVPSPCLSNPCQNGGTCVDADEGYVCECPEGFMGLDCRERILNDCDCRNGGRCLGANTTLCQCPPGFFGLLCEFEVTATPCNMNTQCPDGGYCMEYGGSYLCVCHTDHNISHSLPSPCDSDPCFNGGSCDAHEDSYTCECPRGFHGRHCEKARPHLCSSGPCRNGGTCKEMGDEYRCTCPYRFTGRHCEIGKPDSCASGPCHNGGTCFHYIGKYKCDCPPGFSGRHCEIAPSPCFRSPCMNGGTCEDLGTDFSCYCQPGYTGHRCQAEVDCGHPEEVEHATMRFNGTHVGSVALYTCEPGFSLSALSHIRVCQPQGVWSQPPQCIEVDECRSQPCLHGGSCQDLIADYQCLCSPGYEGVHCELETDECQAQPCRNGGSCRDLPRAFICQCPEGFVGIHCETEVDACASSPCQHGGRCEDGGGAYLCVCPEGFFGYNCETVSDPCFSSPCGSRGYCLASNGSHSCTCKVGYTGKDCTKELLPPTALRVERVEESGVSISWSPPEGTTARQVLDGYAVTYASSDGSSRRTDFVDRSRSSHQLRALAAGRAYNISVFSVKRNTNNKNDISRPAALLTRTRPRPIEDFEVTNISANAISVQWALHRIQHATVSRVRVSILYPEASAVQSTEVDRSVDRLTFGDLLPGRRYTVRLTTLSGPGGAEYPTESLASAPLNVWTRPLPPANLTASRVTATSAHMIWDTPAPGISLEAYVINVTTSQSTKSRYIPNGKLVSYTVRDLMPGRRYQLSVTAVQSTEQGQLHSEPAHLYIITSPRDGTDRRWHHGGHHSRMLRNRPAPVRLPELRLLNDHSAPETPTQSSRFSELVDGRGRVSARFGGLPSRAVTVRSQPTTPVPLKNTEAPEQVHLALQLPKNSSKDTESTPGSCSEDACQNGGTCVPGADAHSCDCRPGFKGRHCELACEKVPRPCTRLFSETKSFPVWEGDICHHVYKKVYKVHQDVCFKERCQSTSLRKPKQETK.

The N-terminal stretch at 1–24 (MRLGAAWALLLAAALGLGTRGVRA) is a signal peptide. The region spanning 103-258 (AFWADVDNRR…GRWAFRIDDA (156 aa)) is the NIDO domain. EGF-like domains lie at 268 to 309 (TTSV…RRCH), 311 to 347 (DVNE…PTCE), and 349 to 385 (AQSP…ATCE). Disulfide bonds link cysteine 272–cysteine 284, cysteine 278–cysteine 297, cysteine 299–cysteine 308, cysteine 315–cysteine 326, cysteine 320–cysteine 335, cysteine 337–cysteine 346, cysteine 353–cysteine 364, cysteine 358–cysteine 373, cysteine 375–cysteine 384, cysteine 391–cysteine 402, cysteine 396–cysteine 411, cysteine 413–cysteine 422, cysteine 433–cysteine 444, cysteine 438–cysteine 453, cysteine 455–cysteine 464, cysteine 472–cysteine 480, cysteine 474–cysteine 488, and cysteine 490–cysteine 499. An N-linked (GlcNAc...) asparagine glycan is attached at asparagine 292. An EGF-like 4; calcium-binding domain is found at 387-423 (DVDECSSDPCQNGGSCVDLVGNYSCICVEPFEGPQCE). Asparagine 408 is a glycosylation site (N-linked (GlcNAc...) asparagine). 2 consecutive EGF-like domains span residues 429–465 (VPSP…LDCR) and 468–500 (ILND…LLCE). Asparagine 484 carries N-linked (GlcNAc...) asparagine glycosylation. N-linked (GlcNAc...) asparagine glycosylation occurs at asparagine 536. 4 consecutive EGF-like domains span residues 541–577 (LPSP…RHCE), 580–616 (RPHL…RHCE), 619–655 (KPDS…RHCE), and 657–693 (APSP…HRCQ). Intrachain disulfides connect cysteine 545/cysteine 556, cysteine 550/cysteine 565, cysteine 567/cysteine 576, cysteine 584/cysteine 595, cysteine 589/cysteine 604, cysteine 606/cysteine 615, cysteine 623/cysteine 634, cysteine 628/cysteine 643, cysteine 645/cysteine 654, cysteine 661/cysteine 672, cysteine 666/cysteine 681, cysteine 683/cysteine 692, cysteine 698/cysteine 739, cysteine 724/cysteine 751, cysteine 757/cysteine 768, cysteine 762/cysteine 777, cysteine 779/cysteine 788, cysteine 795/cysteine 806, cysteine 800/cysteine 815, cysteine 817/cysteine 826, cysteine 833/cysteine 844, cysteine 838/cysteine 853, cysteine 855/cysteine 864, cysteine 871/cysteine 882, cysteine 876/cysteine 891, and cysteine 893/cysteine 902. Residues 696 to 753 (VDCGHPEEVEHATMRFNGTHVGSVALYTCEPGFSLSALSHIRVCQPQGVWSQPPQCIE) form the Sushi domain. N-linked (GlcNAc...) asparagine glycosylation occurs at asparagine 712. The EGF-like 11; calcium-binding domain occupies 753–789 (EVDECRSQPCLHGGSCQDLIADYQCLCSPGYEGVHCE). The region spanning 791-827 (ETDECQAQPCRNGGSCRDLPRAFICQCPEGFVGIHCE) is the EGF-like 12; calcium-binding domain. 2 EGF-like domains span residues 829 to 865 (EVDA…YNCE) and 867 to 903 (VSDP…KDCT). Asparagine 886 is a glycosylation site (N-linked (GlcNAc...) asparagine). Fibronectin type-III domains follow at residues 908–1006 (PPTA…TRPR), 1007–1105 (PIED…TRPL), and 1106–1200 (PPAN…SPRD). N-linked (GlcNAc...) asparagine glycosylation is found at asparagine 977, asparagine 1015, asparagine 1109, asparagine 1139, and asparagine 1298. Positions 1306-1342 (TPGSCSEDACQNGGTCVPGADAHSCDCRPGFKGRHCE) constitute an EGF-like 15 domain. Cystine bridges form between cysteine 1310–cysteine 1321, cysteine 1315–cysteine 1330, and cysteine 1332–cysteine 1341.

Phosphorylated on serine and threonine residues. Post-translationally, N-glycosylated. In terms of tissue distribution, expressed in lung.

It localises to the secreted. It is found in the extracellular space. The protein resides in the extracellular matrix. In Mus musculus (Mouse), this protein is Sushi, nidogen and EGF-like domain-containing protein 1.